Reading from the N-terminus, the 287-residue chain is GPN-loop GTPase 3 (287 aa).

12-17 (GAGKST) lines the GTP pocket. The Gly-Pro-Asn (GPN)-loop; involved in dimer interface signature appears at 69 to 71 (GPN). A GTP-binding site is contributed by 172–175 (SKMD).

The protein belongs to the GPN-loop GTPase family. As to quaternary structure, heterodimers with GPN1 or GPN2. Binds to RNA polymerase II (RNAPII).

Functionally, small GTPase required for proper nuclear import of RNA polymerase II and III (RNAPII and RNAPIII). May act at an RNAP assembly step prior to nuclear import. The sequence is that of GPN-loop GTPase 3 from Cryptococcus neoformans var. neoformans serotype D (strain B-3501A) (Filobasidiella neoformans).